Here is a 407-residue protein sequence, read N- to C-terminus: Substance-P receptor (407 aa).

The Extracellular segment spans residues 1–31 (MDNVLPMDSDLFPNISTNTSESNQFVQPTWQ). Residues Asn-14 and Asn-18 are each glycosylated (N-linked (GlcNAc...) asparagine). A helical membrane pass occupies residues 32 to 54 (IVLWAAAYTVIVVTSVVGNVVVI). Topologically, residues 55 to 64 (WIILAHKRMR) are cytoplasmic. A helical transmembrane segment spans residues 65–86 (TVTNYFLVNLAFAEACMAAFNT). The Extracellular portion of the chain corresponds to 87 to 106 (VVNFTYAVHNVWYYGLFYCK). The cysteines at positions 105 and 180 are disulfide-linked. Residues 107-128 (FHNFFPIAALFASIYSMTAVAF) form a helical membrane-spanning segment. The Cytoplasmic segment spans residues 129–148 (DRYMAIIHPLQPRLSATATK). A helical transmembrane segment spans residues 149–169 (VVIFVIWVLALLLAFPQGYYS). At 170-194 (TTETMPSRVVCMIEWPEHPNRTYEK) the chain is on the extracellular side. A helical membrane pass occupies residues 195–219 (AYHICVTVLIYFLPLLVIGYAYTVV). Topologically, residues 220 to 248 (GITLWASEIPGDSSDRYHEQVSAKRKVVK) are cytoplasmic. A helical membrane pass occupies residues 249-270 (MMIVVVCTFAICWLPFHVFFLL). Residues 271–283 (PYINPDLYLKKFI) lie on the Extracellular side of the membrane. The helical transmembrane segment at 284–308 (QQVYLASMWLAMSSTMYNPIIYCCL) threads the bilayer. At 309-407 (NDRFRLGFKH…SSSFYSNMLA (99 aa)) the chain is on the cytoplasmic side. Residue Cys-322 is the site of S-palmitoyl cysteine attachment. A disordered region spans residues 362–407 (VGAHEEEPEEGPKATPSSLDLTSNGSSRSNSKTMTESSSFYSNMLA). Positions 376–407 (TPSSLDLTSNGSSRSNSKTMTESSSFYSNMLA) are enriched in polar residues.

Belongs to the G-protein coupled receptor 1 family. Interacts with ARRB1.

It localises to the cell membrane. This is a receptor for the tachykinin neuropeptide substance P. It is probably associated with G proteins that activate a phosphatidylinositol-calcium second messenger system. The rank order of affinity of this receptor to tachykinins is: substance P &gt; substance K &gt; neuromedin-K. The protein is Substance-P receptor (Tacr1) of Rattus norvegicus (Rat).